The following is a 180-amino-acid chain: Molybdopterin synthase catalytic subunit (180 aa).

Substrate-binding positions include 123–124, Lys139, and 146–148; these read HR and KLE. The disordered stretch occupies residues 161–180; it reads RDGQKGVKVEGGKEGVEAKH.

It belongs to the MoaE family. MOCS2B subfamily. In terms of assembly, heterotetramer; composed of 2 small (MOCS2A) and 2 large (MOCS2B) subunits.

Its subcellular location is the cytoplasm. The catalysed reaction is 2 [molybdopterin-synthase sulfur-carrier protein]-C-terminal-Gly-aminoethanethioate + cyclic pyranopterin phosphate + H2O = molybdopterin + 2 [molybdopterin-synthase sulfur-carrier protein]-C-terminal Gly-Gly + 2 H(+). The protein operates within cofactor biosynthesis; molybdopterin biosynthesis. Functionally, catalytic subunit of the molybdopterin synthase complex, a complex that catalyzes the conversion of precursor Z into molybdopterin. Acts by mediating the incorporation of 2 sulfur atoms from thiocarboxylated MOCS2A into precursor Z to generate a dithiolene group. The polypeptide is Molybdopterin synthase catalytic subunit (Pyrenophora tritici-repentis (strain Pt-1C-BFP) (Wheat tan spot fungus)).